A 30-amino-acid polypeptide reads, in one-letter code: Ornithine carbamoyltransferase, catabolic (30 aa).

The protein belongs to the aspartate/ornithine carbamoyltransferase superfamily. OTCase family.

It localises to the cytoplasm. The catalysed reaction is carbamoyl phosphate + L-ornithine = L-citrulline + phosphate + H(+). It functions in the pathway amino-acid degradation; L-arginine degradation via ADI pathway; carbamoyl phosphate from L-arginine: step 2/2. The chain is Ornithine carbamoyltransferase, catabolic (arcB) from Aeromonas caviae (Aeromonas punctata).